Reading from the N-terminus, the 135-residue chain is NADPH-dependent 7-cyano-7-deazaguanine reductase (135 aa).

Cysteine 48 acts as the Thioimide intermediate in catalysis. The active-site Proton donor is the aspartate 55. Substrate-binding positions include 70 to 72 and 89 to 90; these read IEL and HE.

Belongs to the GTP cyclohydrolase I family. QueF type 1 subfamily.

Its subcellular location is the cytoplasm. The enzyme catalyses 7-aminomethyl-7-carbaguanine + 2 NADP(+) = 7-cyano-7-deazaguanine + 2 NADPH + 3 H(+). It participates in tRNA modification; tRNA-queuosine biosynthesis. In terms of biological role, catalyzes the NADPH-dependent reduction of 7-cyano-7-deazaguanine (preQ0) to 7-aminomethyl-7-deazaguanine (preQ1). The chain is NADPH-dependent 7-cyano-7-deazaguanine reductase from Prochlorococcus marinus (strain MIT 9303).